We begin with the raw amino-acid sequence, 471 residues long: Glutamyl-tRNA(Gln) amidotransferase subunit A (471 aa).

Catalysis depends on charge relay system residues Lys66 and Ser141. Residue Ser165 is the Acyl-ester intermediate of the active site.

The protein belongs to the amidase family. GatA subfamily. As to quaternary structure, heterotrimer of A, B and C subunits.

It carries out the reaction L-glutamyl-tRNA(Gln) + L-glutamine + ATP + H2O = L-glutaminyl-tRNA(Gln) + L-glutamate + ADP + phosphate + H(+). Functionally, allows the formation of correctly charged Gln-tRNA(Gln) through the transamidation of misacylated Glu-tRNA(Gln) in organisms which lack glutaminyl-tRNA synthetase. The reaction takes place in the presence of glutamine and ATP through an activated gamma-phospho-Glu-tRNA(Gln). The sequence is that of Glutamyl-tRNA(Gln) amidotransferase subunit A from Thermus thermophilus (strain ATCC BAA-163 / DSM 7039 / HB27).